A 252-amino-acid chain; its full sequence is Membrane protein insertase YidC (252 aa).

Residues 1-20 (MRKKFGIIVALIALTTLLSG) form the signal peptide. Residue cysteine 21 is the site of N-palmitoyl cysteine attachment. The S-diacylglycerol cysteine moiety is linked to residue cysteine 21. 5 helical membrane-spanning segments follow: residues 59–79 (YGLAIIIVTLFVRLLLMPLNV), 129–149 (LAGCLPILVQMPIFVAMYHAI), 160–180 (FLWFQLGSPDYILPILTGLFT), 206–226 (IMLYVMPIMIGVMAFFFPAAL), and 228–248 (LYWVTGNIFMVFQTLLINKPM).

It belongs to the OXA1/ALB3/YidC family. Type 2 subfamily.

The protein localises to the cell membrane. In terms of biological role, required for the insertion and/or proper folding and/or complex formation of integral membrane proteins into the membrane. Involved in integration of membrane proteins that insert both dependently and independently of the Sec translocase complex, as well as at least some lipoproteins. This chain is Membrane protein insertase YidC, found in Oceanobacillus iheyensis (strain DSM 14371 / CIP 107618 / JCM 11309 / KCTC 3954 / HTE831).